The sequence spans 61 residues: 14-3-3-like protein (61 aa).

This sequence belongs to the 14-3-3 family.

The protein is 14-3-3-like protein of Zea mays (Maize).